The chain runs to 173 residues: Photosystem I assembly protein Ycf3 (173 aa).

TPR repeat units lie at residues 35–68, 72–105, and 120–153; these read AFVYYRDGMSAQAEGEYAEALEYYEEALTLEEDT, GYILYNMGLIYASNGDHDKALELYHQAIELNPRL, and GEKAKETGDHDGGEALFDQAADYWIRAIRMAPNN.

The protein belongs to the Ycf3 family.

Its subcellular location is the cellular thylakoid membrane. Functionally, essential for the assembly of the photosystem I (PSI) complex. May act as a chaperone-like factor to guide the assembly of the PSI subunits. The polypeptide is Photosystem I assembly protein Ycf3 (Nostoc sp. (strain PCC 7120 / SAG 25.82 / UTEX 2576)).